The chain runs to 76 residues: Small ribosomal subunit protein bS18 (76 aa).

The protein belongs to the bacterial ribosomal protein bS18 family. In terms of assembly, part of the 30S ribosomal subunit. Forms a tight heterodimer with protein bS6.

Binds as a heterodimer with protein bS6 to the central domain of the 16S rRNA, where it helps stabilize the platform of the 30S subunit. This is Small ribosomal subunit protein bS18 from Pseudomonas entomophila (strain L48).